The chain runs to 29 residues: Cyclotide vibi-A (29 aa).

The segment at residues 1–29 (GLPVCGETCFGGTCNTPGCSCSYPICTRN) is a cross-link (cyclopeptide (Gly-Asn)). Disulfide bonds link cysteine 5–cysteine 19, cysteine 9–cysteine 21, and cysteine 14–cysteine 26.

This is a cyclic peptide.

In terms of biological role, probably participates in a plant defense mechanism. In Viola biflora (Yellow wood violet), this protein is Cyclotide vibi-A.